We begin with the raw amino-acid sequence, 421 residues long: N-succinylarginine dihydrolase (421 aa).

Residues 19 to 28 (AGLSLGNLAS), N105, and 132 to 133 (HR) contribute to the substrate site. Residue E167 is part of the active site. R199 provides a ligand contact to substrate. Residue H235 is part of the active site. D237 and N346 together coordinate substrate. C352 serves as the catalytic Nucleophile.

Belongs to the succinylarginine dihydrolase family. As to quaternary structure, homodimer.

The catalysed reaction is N(2)-succinyl-L-arginine + 2 H2O + 2 H(+) = N(2)-succinyl-L-ornithine + 2 NH4(+) + CO2. Its pathway is amino-acid degradation; L-arginine degradation via AST pathway; L-glutamate and succinate from L-arginine: step 2/5. Catalyzes the hydrolysis of N(2)-succinylarginine into N(2)-succinylornithine, ammonia and CO(2). This chain is N-succinylarginine dihydrolase, found in Novosphingobium aromaticivorans (strain ATCC 700278 / DSM 12444 / CCUG 56034 / CIP 105152 / NBRC 16084 / F199).